The primary structure comprises 275 residues: Large ribosomal subunit protein uL2 (275 aa).

Disordered regions lie at residues 1–20 (MAVK…TTAD) and 214–275 (WLGR…TRRK). The span at 255–275 (KGLKTRRKRKTSDRFIVTRRK) shows a compositional bias: basic residues.

The protein belongs to the universal ribosomal protein uL2 family. As to quaternary structure, part of the 50S ribosomal subunit. Forms a bridge to the 30S subunit in the 70S ribosome.

One of the primary rRNA binding proteins. Required for association of the 30S and 50S subunits to form the 70S ribosome, for tRNA binding and peptide bond formation. It has been suggested to have peptidyltransferase activity; this is somewhat controversial. Makes several contacts with the 16S rRNA in the 70S ribosome. In Deinococcus radiodurans (strain ATCC 13939 / DSM 20539 / JCM 16871 / CCUG 27074 / LMG 4051 / NBRC 15346 / NCIMB 9279 / VKM B-1422 / R1), this protein is Large ribosomal subunit protein uL2 (rplB).